Reading from the N-terminus, the 156-residue chain is ATP synthase subunit b (156 aa).

The chain crosses the membrane as a helical span at residues 7–27; the sequence is IFFQMLVFFVLGWFTMKFVWP.

The protein belongs to the ATPase B chain family. As to quaternary structure, F-type ATPases have 2 components, F(1) - the catalytic core - and F(0) - the membrane proton channel. F(1) has five subunits: alpha(3), beta(3), gamma(1), delta(1), epsilon(1). F(0) has three main subunits: a(1), b(2) and c(10-14). The alpha and beta chains form an alternating ring which encloses part of the gamma chain. F(1) is attached to F(0) by a central stalk formed by the gamma and epsilon chains, while a peripheral stalk is formed by the delta and b chains.

It is found in the cell inner membrane. Functionally, f(1)F(0) ATP synthase produces ATP from ADP in the presence of a proton or sodium gradient. F-type ATPases consist of two structural domains, F(1) containing the extramembraneous catalytic core and F(0) containing the membrane proton channel, linked together by a central stalk and a peripheral stalk. During catalysis, ATP synthesis in the catalytic domain of F(1) is coupled via a rotary mechanism of the central stalk subunits to proton translocation. Component of the F(0) channel, it forms part of the peripheral stalk, linking F(1) to F(0). The sequence is that of ATP synthase subunit b from Bordetella petrii (strain ATCC BAA-461 / DSM 12804 / CCUG 43448).